Here is a 433-residue protein sequence, read N- to C-terminus: Glutamyl-tRNA reductase (433 aa).

Substrate-binding positions include 49-52 (TCNR), S114, 119-121 (EPQ), and Q125. The active-site Nucleophile is the C50. Residue 201–206 (GAGETI) participates in NADP(+) binding.

This sequence belongs to the glutamyl-tRNA reductase family. As to quaternary structure, homodimer.

The enzyme catalyses (S)-4-amino-5-oxopentanoate + tRNA(Glu) + NADP(+) = L-glutamyl-tRNA(Glu) + NADPH + H(+). The protein operates within porphyrin-containing compound metabolism; protoporphyrin-IX biosynthesis; 5-aminolevulinate from L-glutamyl-tRNA(Glu): step 1/2. Catalyzes the NADPH-dependent reduction of glutamyl-tRNA(Glu) to glutamate 1-semialdehyde (GSA). This is Glutamyl-tRNA reductase from Histophilus somni (strain 2336) (Haemophilus somnus).